The primary structure comprises 299 residues: Probable arylamine N-acetyltransferase 2 (299 aa).

Cys75 (acyl-thioester intermediate) is an active-site residue. Residues His115 and Asp130 contribute to the active site.

This sequence belongs to the arylamine N-acetyltransferase family.

The enzyme catalyses an arylamine + acetyl-CoA = an N-acetylarylamine + CoA. In Dictyostelium discoideum (Social amoeba), this protein is Probable arylamine N-acetyltransferase 2.